Here is a 222-residue protein sequence, read N- to C-terminus: Adenylate kinase (222 aa).

Residue serine 2 is a propeptide, removed in mature form. An N-acetylserine mark is found at serine 2 and serine 3. 16–21 (GAGKGT) provides a ligand contact to ATP. An NMP region spans residues 36 to 65 (ATGDMLRSQIAKGTQLGLEAKKIMDQGGLV). AMP contacts are provided by residues threonine 37, arginine 42, 63-65 (GLV), 92-95 (GFPR), and glutamine 99. The segment at 133-170 (GRLIHPASGRSYHKIFNPPKEDMKDDVTGEALVQRSDD) is LID. Residues arginine 134 and 143-144 (SY) each bind ATP. The AMP site is built by arginine 167 and arginine 178. Residue glutamine 206 coordinates ATP.

This sequence belongs to the adenylate kinase family. AK2 subfamily. In terms of assembly, monomer.

It localises to the cytoplasm. Its subcellular location is the cytosol. It is found in the mitochondrion intermembrane space. It catalyses the reaction AMP + ATP = 2 ADP. Its function is as follows. Catalyzes the reversible transfer of the terminal phosphate group between ATP and AMP. Plays an important role in cellular energy homeostasis and in adenine nucleotide metabolism. Adenylate kinase activity is critical for regulation of the phosphate utilization and the AMP de novo biosynthesis pathways. The sequence is that of Adenylate kinase from Saccharomyces cerevisiae (strain YJM789) (Baker's yeast).